A 156-amino-acid polypeptide reads, in one-letter code: Small ribosomal subunit protein uS7 (156 aa).

Belongs to the universal ribosomal protein uS7 family. In terms of assembly, part of the 30S ribosomal subunit. Contacts proteins S9 and S11.

In terms of biological role, one of the primary rRNA binding proteins, it binds directly to 16S rRNA where it nucleates assembly of the head domain of the 30S subunit. Is located at the subunit interface close to the decoding center, probably blocks exit of the E-site tRNA. The sequence is that of Small ribosomal subunit protein uS7 from Oceanobacillus iheyensis (strain DSM 14371 / CIP 107618 / JCM 11309 / KCTC 3954 / HTE831).